We begin with the raw amino-acid sequence, 855 residues long: Suppressor of tumorigenicity 14 protein homolog (855 aa).

The disordered stretch occupies residues 1-21 (MKSERARRGAGGSGDLGAGFK). Residues 1-55 (MKSERARRGAGGSGDLGAGFKYTSRPENMNGCEEGVEFLPANNSSKVEKGGPRRW) are Cytoplasmic-facing. Position 13 is a phosphoserine (Ser13). Residues 56–76 (VVLMAVLAAFLALSLLAGLLA) form a helical; Signal-anchor for type II membrane protein membrane-spanning segment. Over 77–855 (WHFQDRNVRV…RDWIKAQIGV (779 aa)) the chain is Extracellular. Positions 86–203 (VQKIFNGYLS…TSVVAFPSDP (118 aa)) constitute an SEA domain. N-linked (GlcNAc...) asparagine glycosylation is present at Asn109. Residues Cys214 and Cys244 are joined by a disulfide bond. CUB domains follow at residues 214–334 (CSFA…FFQL) and 340–447 (CGGY…FLSF). Asn302 and Asn365 each carry an N-linked (GlcNAc...) asparagine glycan. Intrachain disulfides connect Cys340-Cys366, Cys397-Cys410, Cys453-Cys464, Cys459-Cys477, Cys471-Cys486, Cys488-Cys501, Cys496-Cys514, Cys508-Cys523, Cys525-Cys537, Cys532-Cys550, Cys544-Cys559, Cys567-Cys579, Cys574-Cys593, Cys587-Cys602, and Cys641-Cys657. LDL-receptor class A domains lie at 452 to 487 (PCPG…LDCK), 487 to 524 (KCNA…EGCS), 524 to 560 (SCPP…AKCQ), and 566 to 603 (PCTE…KDCD). N-linked (GlcNAc...) asparagine glycosylation is present at Asn489. The region spanning 615–854 (VVGGENSDQG…FRDWIKAQIG (240 aa)) is the Peptidase S1 domain. Catalysis depends on charge relay system residues His656 and Asp711. A glycan (N-linked (GlcNAc...) asparagine) is linked at Asn772. 2 disulfides stabilise this stretch: Cys776-Cys790 and Cys801-Cys830. Ser805 functions as the Charge relay system in the catalytic mechanism.

It belongs to the peptidase S1 family. As to quaternary structure, interacts with CDCP1. May interact with TMEFF1.

It localises to the membrane. The catalysed reaction is Cleaves various synthetic substrates with Arg or Lys at the P1 position and prefers small side-chain amino acids, such as Ala and Gly, at the P2 position.. Exhibits trypsin-like activity as defined by cleavage of synthetic substrates with Arg or Lys as the P1 site. Involved in the terminal differentiation of keratinocytes through prostasin (PRSS8) activation and filaggrin (FLG) processing. Proteolytically cleaves and therefore activates TMPRSS13. This is Suppressor of tumorigenicity 14 protein homolog (ST14) from Bos taurus (Bovine).